The primary structure comprises 331 residues: UPF0324 membrane protein SA0329 (331 aa).

The next 11 helical transmembrane spans lie at Phe-9–Ala-26, Ile-31–Tyr-48, Leu-69–Gly-88, Leu-93–Leu-115, Ala-122–Phe-144, Ser-154–Phe-176, Tyr-183–Gly-202, Leu-217–Met-234, Ile-247–Pro-269, Leu-273–Val-295, and Leu-308–Tyr-330.

The protein belongs to the UPF0324 family.

It localises to the cell membrane. In Staphylococcus aureus (strain N315), this protein is UPF0324 membrane protein SA0329.